The following is a 370-amino-acid chain: Aminomethyltransferase (370 aa).

It belongs to the GcvT family. The glycine cleavage system is composed of four proteins: P, T, L and H.

The enzyme catalyses N(6)-[(R)-S(8)-aminomethyldihydrolipoyl]-L-lysyl-[protein] + (6S)-5,6,7,8-tetrahydrofolate = N(6)-[(R)-dihydrolipoyl]-L-lysyl-[protein] + (6R)-5,10-methylene-5,6,7,8-tetrahydrofolate + NH4(+). Its function is as follows. The glycine cleavage system catalyzes the degradation of glycine. This Clostridium botulinum (strain Loch Maree / Type A3) protein is Aminomethyltransferase.